The following is a 297-amino-acid chain: Phosphoribosylaminoimidazole-succinocarboxamide synthase (297 aa).

The protein belongs to the SAICAR synthetase family.

The catalysed reaction is 5-amino-1-(5-phospho-D-ribosyl)imidazole-4-carboxylate + L-aspartate + ATP = (2S)-2-[5-amino-1-(5-phospho-beta-D-ribosyl)imidazole-4-carboxamido]succinate + ADP + phosphate + 2 H(+). The protein operates within purine metabolism; IMP biosynthesis via de novo pathway; 5-amino-1-(5-phospho-D-ribosyl)imidazole-4-carboxamide from 5-amino-1-(5-phospho-D-ribosyl)imidazole-4-carboxylate: step 1/2. The sequence is that of Phosphoribosylaminoimidazole-succinocarboxamide synthase from Corynebacterium glutamicum (strain ATCC 13032 / DSM 20300 / JCM 1318 / BCRC 11384 / CCUG 27702 / LMG 3730 / NBRC 12168 / NCIMB 10025 / NRRL B-2784 / 534).